Here is a 619-residue protein sequence, read N- to C-terminus: MRKDVRILLVGEPKVGKTSLIMSLVSEEFPDEVPPRAEEITIPADVTPERVPTHIVDYSEAEQSDEQLYQEITKANVICIVYSVNNKKSIEKVTSHWIPLINERTDKDSRVPLILVGNKSDLVEHSSMETILPIMNQYSEIETCVECSAKNLKNISELFYYAQKAVLHPTGPLYSPEEKEMKPSCIKALTRIFKISDLDNDGILNDNELNFFQRTCFNIPLAPQALEDVKNVVRKNMTDGVKDNGLTLKGFLFLHTLFIQRGRHETTWTVLRRFGYDDDLELTQEYLFPLFKIPPDCTTELNHNAYLFLQSVFDKHDKDRDCALSPDELKDLFKVFPYMPWGPDVNNTVCTNEQGWITYQGYLSQWTLTTYLDVQRCLEYLGYLGYSIIQEQESQAAAITVTRNKRIDLQKKQTQRSVFRCNVLGARGCGKSGFLQAFLGRNLVRQKRIREDHKSYYAISTTYVYGQEKYLLLHEVLPDVEFLSEADLACDVVCLVYDISNPRSFEYCAKVYKKHFMDSKTPCVIIAAKSDLHEARQYYSLSPLDFCRKHKLHPPQLFTCNTTEAPSKDLYTKLTTMAMYPHMTQADLKNSTFWLRASVGATVFAVLGFAMYKALLKQR.

At 1–593 the chain is on the cytoplasmic side; that stretch reads MRKDVRILLV…TQADLKNSTF (593 aa). One can recognise a Miro 1 domain in the interval 2–168; it reads RKDVRILLVG…FYYAQKAVLH (167 aa). GTP is bound by residues lysine 14, glycine 16, lysine 17, threonine 18, and serine 19. Position 18 (threonine 18) interacts with Mg(2+). Residues proline 35 and aspartate 57 each coordinate Mg(2+). Positions 59, 118, 119, 121, 149, and 150 each coordinate GTP. EF-hand domains follow at residues 184-219 and 304-339; these read SCIKALTRIFKISDLDNDGILNDNELNFFQRTCFNI and NAYLFLQSVFDKHDKDRDCALSPDELKDLFKVFPYM. Residues aspartate 197, aspartate 199, aspartate 201, glutamate 208, aspartate 317, aspartate 319, aspartate 321, alanine 323, and glutamate 328 each contribute to the Ca(2+) site. In terms of domain architecture, Miro 2 spans 416-580; sequence RSVFRCNVLG…YTKLTTMAMY (165 aa). Residues arginine 427, cysteine 429, glycine 430, lysine 431, serine 432, glycine 433, lysine 447, lysine 529, aspartate 531, threonine 559, and cysteine 560 each coordinate GTP. Position 427 (arginine 427) interacts with Mg(2+). The helical; Anchor for type IV membrane protein transmembrane segment at 594–616 threads the bilayer; sequence WLRASVGATVFAVLGFAMYKALL. Residues 617–619 are Mitochondrial intermembrane-facing; sequence KQR.

This sequence belongs to the mitochondrial Rho GTPase family. As to quaternary structure, homodimer.

Its subcellular location is the mitochondrion outer membrane. It catalyses the reaction GTP + H2O = GDP + phosphate + H(+). The catalysed reaction is ATP + H2O = ADP + phosphate + H(+). The enzyme catalyses UTP + H2O = UDP + phosphate + H(+). Atypical mitochondrial nucleoside-triphosphatase (NTPase) involved in mitochondrial trafficking. Probably involved in control of anterograde transport of mitochondria and their subcellular distribution. Can hydrolyze GTP, ATP and UTP. This is Mitochondrial Rho GTPase 1-A (rhot1a) from Danio rerio (Zebrafish).